Here is a 138-residue protein sequence, read N- to C-terminus: Probable histone H2AXb (138 aa).

The span at 1–10 (MSSAGGGGGR) shows a compositional bias: gly residues. The segment at 1–24 (MSSAGGGGGRGKSKGSKSVSRSSK) is disordered. Serine 135 is subject to Phosphoserine; by ATM and ATR. A [ST]-Q motif motif is present at residues 135–136 (SQ).

The protein belongs to the histone H2A family. As to quaternary structure, the nucleosome is a histone octamer containing two molecules each of H2A, H2B, H3 and H4 assembled in one H3-H4 heterotetramer and two H2A-H2B heterodimers. The octamer wraps approximately 147 bp of DNA. Interacts with numerous proteins required for DNA damage signaling and repair when phosphorylated on Ser-135. In terms of processing, phosphorylated to form H2AXS139ph (gamma-H2AX) in response to DNA double strand breaks (DSBs) generated by exogenous genotoxic agents and by stalled replication forks, and may also occur during meiotic recombination events. Phosphorylation can extend up to several thousand nucleosomes from the actual site of the DSB and may mark the surrounding chromatin for recruitment of proteins required for DNA damage signaling and repair. Widespread phosphorylation may also serve to amplify the damage signal or aid repair of persistent lesions. H2AXS139ph in response to ionizing radiation is mediated by ATM while defects in DNA replication induce H2AXS139ph subsequent to activation of ATR. Dephosphorylation of H2AXS139ph by PP2A is required for DNA DSB repair.

The protein localises to the nucleus. It is found in the chromosome. Its function is as follows. Variant histone H2A which replaces conventional H2A in a subset of nucleosomes. Nucleosomes wrap and compact DNA into chromatin, limiting DNA accessibility to the cellular machineries which require DNA as a template. Histones thereby play a central role in transcription regulation, DNA repair, DNA replication and chromosomal stability. DNA accessibility is regulated via a complex set of post-translational modifications of histones, also called histone code, and nucleosome remodeling. Required for checkpoint-mediated arrest of cell cycle progression in response to low doses of ionizing radiation and for efficient repair of DNA double strand breaks (DSBs) specifically when modified by C-terminal phosphorylation. This Oryza sativa subsp. indica (Rice) protein is Probable histone H2AXb.